A 236-amino-acid chain; its full sequence is tRNA1(Val) (adenine(37)-N6)-methyltransferase (236 aa).

Belongs to the methyltransferase superfamily. tRNA (adenine-N(6)-)-methyltransferase family.

The protein localises to the cytoplasm. The enzyme catalyses adenosine(37) in tRNA1(Val) + S-adenosyl-L-methionine = N(6)-methyladenosine(37) in tRNA1(Val) + S-adenosyl-L-homocysteine + H(+). Functionally, specifically methylates the adenine in position 37 of tRNA(1)(Val) (anticodon cmo5UAC). This Shewanella sp. (strain MR-4) protein is tRNA1(Val) (adenine(37)-N6)-methyltransferase.